Reading from the N-terminus, the 224-residue chain is Inhibitor of apoptosis protein (224 aa).

A BIR repeat occupies 29–92 (VDARNQSFAI…AFWSRNCGFM (64 aa)). Positions 62, 65, 82, and 89 each coordinate Zn(2+).

It belongs to the asfivirus IAP family. In terms of assembly, interacts with subunit p17 of host CASP3.

The protein resides in the host cytoplasm. The protein localises to the virion. Its function is as follows. Prevents apoptosis of host cell by inhibiting caspase-3/CASP3 activation to promote the viral replication. Also induces the activation of host NF-kappaB. This African swine fever virus (isolate Tick/South Africa/Wildebeeslaagte M1/1996) (ASFV) protein is Inhibitor of apoptosis protein (p27).